Consider the following 254-residue polypeptide: Bowman-Birk type bran trypsin inhibitor (254 aa).

Residues 1 to 22 (MSNTTMATSTILLFLLAGLAAA) form the signal peptide. A propeptide spanning residues 23–118 (HGDGDTTIRL…KCTAALDGLS (96 aa)) is cleaved from the precursor. 3 repeats span residues 46 to 120 (KPWD…LSME), 121 to 187 (RPWK…FCTP), and 188 to 251 (RPWG…CKPR). Disulfide bonds link C125–C185, C126–C143, C152–C159, C156–C172, C193–C248, C194–C209, C199–C207, C216–C223, and C220–C236. Positions 252–254 (AEN) are excised as a propeptide.

It belongs to the Bowman-Birk serine protease inhibitor family.

This Oryza sativa subsp. japonica (Rice) protein is Bowman-Birk type bran trypsin inhibitor (RBBI3.3).